Reading from the N-terminus, the 109-residue chain is Flagellar hook-basal body complex protein FliE (109 aa).

Residues 1–38 (MQAIHNDKSLLSPFSELNTDNRTKREESGSTFKEQKGG) form a disordered region. The span at 19–38 (TDNRTKREESGSTFKEQKGG) shows a compositional bias: basic and acidic residues.

This sequence belongs to the FliE family.

It is found in the bacterial flagellum basal body. This Helicobacter pylori (strain P12) protein is Flagellar hook-basal body complex protein FliE.